The following is a 330-amino-acid chain: Aspartate--ammonia ligase (330 aa).

Belongs to the class-II aminoacyl-tRNA synthetase family. AsnA subfamily.

It is found in the cytoplasm. The enzyme catalyses L-aspartate + NH4(+) + ATP = L-asparagine + AMP + diphosphate + H(+). The protein operates within amino-acid biosynthesis; L-asparagine biosynthesis; L-asparagine from L-aspartate (ammonia route): step 1/1. This chain is Aspartate--ammonia ligase, found in Escherichia coli O81 (strain ED1a).